A 278-amino-acid polypeptide reads, in one-letter code: Manganese import system permease protein ScaB (278 aa).

Transmembrane regions (helical) follow at residues 18–38 (ALIT…FIIL), 40–60 (GMSL…ALSF), 61–81 (ILGI…SILI), 136–156 (VTIG…RPLL), 172–192 (VKLY…TAMQ), 194–214 (VGTI…YLYA), 220–240 (MMLL…FIGY), and 244–264 (IAVG…SFFI).

It belongs to the ABC-3 integral membrane protein family.

It is found in the cell membrane. Its function is as follows. Part of an ABC transporter complex involved in manganese import. This is Manganese import system permease protein ScaB from Streptococcus pneumoniae.